Consider the following 464-residue polypeptide: Peptidase inhibitor 16 (464 aa).

Residues 1-27 form the signal peptide; that stretch reads MHGSGSLLACLLPPLLLLGAAPGPAGA. An SCP domain is found at 37–165; it reads VELHNLYRTQ…TNIHLLVCNY (129 aa). N-linked (GlcNAc...) asparagine glycosylation occurs at Asn114. Disordered regions lie at residues 208-241, 260-281, 304-347, and 386-412; these read DLSSLVPEAPSSLATEASSSRREGIDSSLATEPP, VETKAPSSLVTEDSPSMATKTP, PATL…LMGT, and TTLKHKGHSSSKSLSNSPSASATANAV. The segment covering 311–325 has biased composition (basic and acidic residues); that stretch reads STHDPIPKSADKEAS. The span at 395–411 shows a compositional bias: low complexity; sequence SSKSLSNSPSASATANA.

Belongs to the CRISP family. As to quaternary structure, interacts with PSP94/MSMB. N-glycosylated.

It is found in the secreted. Functionally, may inhibit cardiomyocyte growth. This is Peptidase inhibitor 16 (PI16) from Bos taurus (Bovine).